Reading from the N-terminus, the 227-residue chain is Cytochrome c oxidase subunit 2 (227 aa).

The Mitochondrial intermembrane segment spans residues 1-14 (MAYPFQLGLQDATS). The helical transmembrane segment at 15–45 (PIMEELMNFHDHTLMIVFLISSLVLYIISLM) threads the bilayer. Over 46-59 (LTTKLTHTSTMDAQ) the chain is Mitochondrial matrix. A helical membrane pass occupies residues 60–87 (EVETIWTILPAAILILIALPSLRILYMM). Residues 88 to 227 (DEINNPVLTV…YFENWSASMI (140 aa)) are Mitochondrial intermembrane-facing. The Cu cation site is built by His-161, Cys-196, Glu-198, Cys-200, His-204, and Met-207. Glu-198 serves as a coordination point for Mg(2+).

It belongs to the cytochrome c oxidase subunit 2 family. As to quaternary structure, component of the cytochrome c oxidase (complex IV, CIV), a multisubunit enzyme composed of 14 subunits. The complex is composed of a catalytic core of 3 subunits MT-CO1, MT-CO2 and MT-CO3, encoded in the mitochondrial DNA, and 11 supernumerary subunits COX4I, COX5A, COX5B, COX6A, COX6B, COX6C, COX7A, COX7B, COX7C, COX8 and NDUFA4, which are encoded in the nuclear genome. The complex exists as a monomer or a dimer and forms supercomplexes (SCs) in the inner mitochondrial membrane with NADH-ubiquinone oxidoreductase (complex I, CI) and ubiquinol-cytochrome c oxidoreductase (cytochrome b-c1 complex, complex III, CIII), resulting in different assemblies (supercomplex SCI(1)III(2)IV(1) and megacomplex MCI(2)III(2)IV(2)). Found in a complex with TMEM177, COA6, COX18, COX20, SCO1 and SCO2. Interacts with TMEM177 in a COX20-dependent manner. Interacts with COX20. Interacts with COX16. It depends on Cu cation as a cofactor.

The protein localises to the mitochondrion inner membrane. It catalyses the reaction 4 Fe(II)-[cytochrome c] + O2 + 8 H(+)(in) = 4 Fe(III)-[cytochrome c] + 2 H2O + 4 H(+)(out). Functionally, component of the cytochrome c oxidase, the last enzyme in the mitochondrial electron transport chain which drives oxidative phosphorylation. The respiratory chain contains 3 multisubunit complexes succinate dehydrogenase (complex II, CII), ubiquinol-cytochrome c oxidoreductase (cytochrome b-c1 complex, complex III, CIII) and cytochrome c oxidase (complex IV, CIV), that cooperate to transfer electrons derived from NADH and succinate to molecular oxygen, creating an electrochemical gradient over the inner membrane that drives transmembrane transport and the ATP synthase. Cytochrome c oxidase is the component of the respiratory chain that catalyzes the reduction of oxygen to water. Electrons originating from reduced cytochrome c in the intermembrane space (IMS) are transferred via the dinuclear copper A center (CU(A)) of subunit 2 and heme A of subunit 1 to the active site in subunit 1, a binuclear center (BNC) formed by heme A3 and copper B (CU(B)). The BNC reduces molecular oxygen to 2 water molecules using 4 electrons from cytochrome c in the IMS and 4 protons from the mitochondrial matrix. The protein is Cytochrome c oxidase subunit 2 (MT-CO2) of Leggadina forresti (Forrest's mouse).